The primary structure comprises 87 residues: Large ribosomal subunit protein bL27 (87 aa).

Residues 1 to 26 are disordered; the sequence is MAHKKGTGSTRNGRDSNSKRLGVKAY.

This sequence belongs to the bacterial ribosomal protein bL27 family.

The chain is Large ribosomal subunit protein bL27 from Prochlorococcus marinus (strain SARG / CCMP1375 / SS120).